A 229-amino-acid chain; its full sequence is C-&gt;U-editing enzyme APOBEC-1 (229 aa).

The 125-residue stretch at 10–134 (VDPTLRRRIE…QRNRQGLRDL (125 aa)) folds into the CMP/dCMP-type deaminase domain. Residue His61 participates in Zn(2+) binding. The active-site Proton donor is the Glu63. Residues Cys93 and Cys96 each coordinate Zn(2+).

The protein belongs to the cytidine and deoxycytidylate deaminase family. As to quaternary structure, homodimer. Interacts with A1CF; form an mRNA editing complex. Interacts with RBM47; form an mRNA editing complex. Found in a complex with CELF2/CUGBP2 and A1CF. Interacts with HNRPAB. Interacts with SYNCRIP. Zn(2+) serves as cofactor.

The protein localises to the cytoplasm. It is found in the nucleus. The enzyme catalyses a cytidine in mRNA + H2O + H(+) = a uridine in mRNA + NH4(+). It catalyses the reaction cytidine(6666) in apoB mRNA + H2O + H(+) = uridine(6666) in apoB mRNA + NH4(+). Functionally, cytidine deaminase catalyzing the cytidine to uridine postranscriptional editing of a variety of mRNAs. Form complexes with cofactors that confer differential editing activity and selectivity. Responsible for the postranscriptional editing of a CAA codon for Gln to a UAA codon for stop in the apolipoprotein B mRNA. Also involved in CGA (Arg) to UGA (Stop) editing in the NF1 mRNA. May also play a role in the epigenetic regulation of gene expression by participating in DNA demethylation. This chain is C-&gt;U-editing enzyme APOBEC-1, found in Mesocricetus auratus (Golden hamster).